A 267-amino-acid polypeptide reads, in one-letter code: MNIRQIINSKGKRKLSMVTAYSYFQAKMAEEAGIDMILVGDSYGNTILGYENTLPVTMEEMLIAVSAVRRGAPNTFVIADMPFLSYQVSEEKAIENAGRFIKVGANAVKLEGGAEVAGLVKKLVDFGIPVMGHLGLTPQHVNVIGGYRVQGKTDKSVKRLLEGVKLLEEAGVFAIVLELVVEGIAKKLTEETSVPTIGIGAGRYCDGQVLVWHDLLGINTEFSPRFVKRYANLRKDIVDALKKYNEEVKNGEFPGPENVFESGGFDE.

Mg(2+) contacts are provided by Asp41 and Asp80. 3-methyl-2-oxobutanoate contacts are provided by residues 41 to 42, Asp80, and Lys109; that span reads DS. Position 111 (Glu111) interacts with Mg(2+). Residue Glu178 is the Proton acceptor of the active site.

It belongs to the PanB family. As to quaternary structure, homodecamer; pentamer of dimers. Mg(2+) is required as a cofactor.

The protein localises to the cytoplasm. It carries out the reaction 3-methyl-2-oxobutanoate + (6R)-5,10-methylene-5,6,7,8-tetrahydrofolate + H2O = 2-dehydropantoate + (6S)-5,6,7,8-tetrahydrofolate. It participates in cofactor biosynthesis; (R)-pantothenate biosynthesis; (R)-pantoate from 3-methyl-2-oxobutanoate: step 1/2. Functionally, catalyzes the reversible reaction in which hydroxymethyl group from 5,10-methylenetetrahydrofolate is transferred onto alpha-ketoisovalerate to form ketopantoate. The sequence is that of 3-methyl-2-oxobutanoate hydroxymethyltransferase from Kosmotoga olearia (strain ATCC BAA-1733 / DSM 21960 / TBF 19.5.1).